The sequence spans 150 residues: D-aminoacyl-tRNA deacylase (150 aa).

Positions Gly-136–Pro-137 match the Gly-cisPro motif, important for rejection of L-amino acids motif.

The protein belongs to the DTD family. In terms of assembly, homodimer.

The protein localises to the cytoplasm. It carries out the reaction glycyl-tRNA(Ala) + H2O = tRNA(Ala) + glycine + H(+). It catalyses the reaction a D-aminoacyl-tRNA + H2O = a tRNA + a D-alpha-amino acid + H(+). In terms of biological role, an aminoacyl-tRNA editing enzyme that deacylates mischarged D-aminoacyl-tRNAs. Also deacylates mischarged glycyl-tRNA(Ala), protecting cells against glycine mischarging by AlaRS. Acts via tRNA-based rather than protein-based catalysis; rejects L-amino acids rather than detecting D-amino acids in the active site. By recycling D-aminoacyl-tRNA to D-amino acids and free tRNA molecules, this enzyme counteracts the toxicity associated with the formation of D-aminoacyl-tRNA entities in vivo and helps enforce protein L-homochirality. The protein is D-aminoacyl-tRNA deacylase of Staphylococcus aureus (strain Mu50 / ATCC 700699).